A 74-amino-acid chain; its full sequence is Exodeoxyribonuclease 7 small subunit (74 aa).

It belongs to the XseB family. In terms of assembly, heterooligomer composed of large and small subunits.

It is found in the cytoplasm. It catalyses the reaction Exonucleolytic cleavage in either 5'- to 3'- or 3'- to 5'-direction to yield nucleoside 5'-phosphates.. Its function is as follows. Bidirectionally degrades single-stranded DNA into large acid-insoluble oligonucleotides, which are then degraded further into small acid-soluble oligonucleotides. This chain is Exodeoxyribonuclease 7 small subunit, found in Neisseria meningitidis serogroup A / serotype 4A (strain DSM 15465 / Z2491).